Here is a 943-residue protein sequence, read N- to C-terminus: Synaptotagmin-like protein 2 (943 aa).

The region spanning 1–57 is the RabBD domain; that stretch reads MIDLSFLTEEEQEAIMKVLQRDAALKRAEEERVRHLPEKVKDDQQLKNMSGQWFYEA. 3 disordered regions span residues 77–99, 118–291, and 361–613; these read RKKR…KESW, EEPE…VRFH, and ESDR…SNSG. The segment covering 82–99 has biased composition (basic and acidic residues); the sequence is QVADEQSKDRANRAKESW. Residues 125-138 show a composition bias toward low complexity; it reads APASPSSSVVNPVS. A compositionally biased stretch (polar residues) spans 174–192; sequence SQQTKNEQSKNGKTGLFQT. A compositionally biased stretch (basic and acidic residues) spans 194–205; sequence KEGELSESKEES. Polar residues-rich tracts occupy residues 382 to 394, 404 to 416, and 426 to 440; these read PQPS…LPFQ, KNET…SGSF, and EFLT…NSHT. Residues 524 to 537 show a composition bias toward basic and acidic residues; that stretch reads ELVRSAEDDQKADQ. Residues 549 to 560 show a composition bias toward polar residues; that stretch reads STVSSQPDNQFS. A compositionally biased stretch (low complexity) spans 603-613; that stretch reads SSLTNLSSNSG. 2 consecutive C2 domains span residues 637–762 and 777–906; these read VKGS…LKWY and NRGE…VDWM.

Monomer. Binds NRXN1. Binds RAB27A that has been activated by GTP-binding via its N-terminus. Interacts with RAB27B.

The protein resides in the cell membrane. Its function is as follows. May act as a RAB27A effector protein and play a role in cytotoxic granule exocytosis in lymphocytes. This Bos taurus (Bovine) protein is Synaptotagmin-like protein 2 (SYTL2).